A 463-amino-acid chain; its full sequence is tRNA modification GTPase MnmE (463 aa).

3 residues coordinate (6S)-5-formyl-5,6,7,8-tetrahydrofolate: R29, E91, and R130. In terms of domain architecture, TrmE-type G spans 225 to 384 (GLKVAIVGRP…LETAILEIVQ (160 aa)). Residue N235 coordinates K(+). GTP-binding positions include 235–240 (NVGKSS), 254–260 (TDLPGTT), and 279–282 (DTAG). S239 serves as a coordination point for Mg(2+). Positions 254, 256, and 259 each coordinate K(+). Position 260 (T260) interacts with Mg(2+). K463 is a binding site for (6S)-5-formyl-5,6,7,8-tetrahydrofolate.

It belongs to the TRAFAC class TrmE-Era-EngA-EngB-Septin-like GTPase superfamily. TrmE GTPase family. Homodimer. Heterotetramer of two MnmE and two MnmG subunits. K(+) is required as a cofactor.

The protein localises to the cytoplasm. In terms of biological role, exhibits a very high intrinsic GTPase hydrolysis rate. Involved in the addition of a carboxymethylaminomethyl (cmnm) group at the wobble position (U34) of certain tRNAs, forming tRNA-cmnm(5)s(2)U34. The sequence is that of tRNA modification GTPase MnmE from Trichormus variabilis (strain ATCC 29413 / PCC 7937) (Anabaena variabilis).